A 727-amino-acid polypeptide reads, in one-letter code: E3 SUMO-protein ligase pli1 (727 aa).

The region spanning 18 to 52 (ETGLIIPQLKDILRVFGLRLSGTKAELITRIKQLI) is the SAP domain. The 154-residue stretch at 108 to 261 (YSRPFAPVVH…SVVVCFVKVY (154 aa)) folds into the PINIT domain. The SP-RING-type zinc-finger motif lies at 290–371 (QDADIIATST…MQHILESTPS (82 aa)). Zn(2+) is bound by residues C321, H323, C344, and C347. Residues S395 and S396 each carry the phosphoserine modification. Disordered stretches follow at residues 408–558 (ELSD…TQHS) and 706–727 (QSNN…QSID). 2 stretches are compositionally biased toward polar residues: residues 417–435 (TMAN…THNS) and 459–494 (VATS…NRST). Low complexity predominate over residues 546–558 (SQQNNNNSNTQHS).

This sequence belongs to the PIAS family. Interacts with hus5/ubc9.

The protein localises to the nucleus. It participates in protein modification; protein sumoylation. In terms of biological role, acts as an E3 ligase mediating SUMO/Smt3 attachment to other proteins. Involved in the maintenance of the centromere and in telomere length. Regulates recombination, via extension sumoylation, particularly within the heterochromatin repeats. The protein is E3 SUMO-protein ligase pli1 (pli1) of Schizosaccharomyces pombe (strain 972 / ATCC 24843) (Fission yeast).